The sequence spans 441 residues: MSKKLVTEEMRTQWLPVLEKKSEQIQPLTAENVSVRLLQNQAEWNAKNLGESEGPSSVNANVGKWQPVLIDMAKRLAPNNIAMDFFGVQPLAGPDGQIFALRARQGVGDASNTQQSRKELFMEEAQTNYSGDQTTVHSGDPSGFSQADIEGSGTEVSSYGKAMDTVKAEQLGSPTQPWARVGITIQKATVTAKSRGLYADYSHELRQDMMAIHGEDVDAILSDVMVTEIQAEMNREFIRTMNFTAVRFKKFGTNGVVDVAADVSGRWALEKWKYLVFMLEVEANGVGVDTRRGKANRVLCSPNVASALAMAGMLDYSPALNVQAQLAVDPTGQTFAGVLSNGMRVYIDPYAVAEYITLAYKGATALDAGIYFAPYVPLEMYRTQGETTFAPRMAFKTRYGIAANPFVQIPANQDPQVYVTEDGIAKDTNVYFRKGLIKNLY.

Residues 1 to 51 (MSKKLVTEEMRTQWLPVLEKKSEQIQPLTAENVSVRLLQNQAEWNAKNLGE) constitute a propeptide that is removed on maturation.

Its subcellular location is the virion. The chain is Major capsid protein from Serratia marcescens (Serratia marcescens bacteriophage KSP90).